We begin with the raw amino-acid sequence, 309 residues long: Homoserine O-succinyltransferase (309 aa).

Cys142 functions as the Acyl-thioester intermediate in the catalytic mechanism. Lys163 and Ser192 together coordinate substrate. The active-site Proton acceptor is the His235. Glu237 is an active-site residue. Arg249 lines the substrate pocket.

Belongs to the MetA family. In terms of assembly, homodimer.

It is found in the cytoplasm. The catalysed reaction is L-homoserine + succinyl-CoA = O-succinyl-L-homoserine + CoA. It functions in the pathway amino-acid biosynthesis; L-methionine biosynthesis via de novo pathway; O-succinyl-L-homoserine from L-homoserine: step 1/1. Its function is as follows. Transfers a succinyl group from succinyl-CoA to L-homoserine, forming succinyl-L-homoserine. The sequence is that of Homoserine O-succinyltransferase from Escherichia coli O127:H6 (strain E2348/69 / EPEC).